Consider the following 491-residue polypeptide: Hydroxymethylglutaryl-CoA synthase (491 aa).

Glu127 (proton donor/acceptor) is an active-site residue. The active-site Acyl-thioester intermediate is Cys159. Cys159, Thr201, and Ser250 together coordinate (3S)-3-hydroxy-3-methylglutaryl-CoA. Ser276 carries the phosphoserine modification. The Proton donor/acceptor role is filled by His296. (3S)-3-hydroxy-3-methylglutaryl-CoA-binding residues include His296, Lys305, Asn371, and Ser405.

The protein belongs to the thiolase-like superfamily. HMG-CoA synthase family.

It carries out the reaction acetoacetyl-CoA + acetyl-CoA + H2O = (3S)-3-hydroxy-3-methylglutaryl-CoA + CoA + H(+). It functions in the pathway metabolic intermediate biosynthesis; (R)-mevalonate biosynthesis; (R)-mevalonate from acetyl-CoA: step 2/3. Its function is as follows. Hydroxymethylglutaryl-CoA synthase; part of the first module of ergosterol biosynthesis pathway that includes the early steps of the pathway, conserved across all eukaryotes, and which results in the formation of mevalonate from acetyl-coenzyme A (acetyl-CoA). ERG13 condenses acetyl-CoA with acetoacetyl-CoA to form hydroxymethylglutaryl-CoA (HMG-CoA). The first module starts with the action of the cytosolic acetyl-CoA acetyltransferase ERG10 that catalyzes the formation of acetoacetyl-CoA. The hydroxymethylglutaryl-CoA synthase ERG13 then condenses acetyl-CoA with acetoacetyl-CoA to form HMG-CoA. The rate-limiting step of the early module is the reduction to mevalonate by the 3-hydroxy-3-methylglutaryl-coenzyme A (HMG-CoA) reductases HMG1 and HMG2 which are derived from a single ancestral HMGR gene by gene duplication. The chain is Hydroxymethylglutaryl-CoA synthase from Saccharomyces cerevisiae (strain ATCC 204508 / S288c) (Baker's yeast).